The sequence spans 325 residues: NADH-quinone oxidoreductase subunit H (325 aa).

8 helical membrane-spanning segments follow: residues I11–F31, V81–V101, I114–G134, L154–F174, V186–V206, F237–F257, L265–I285, and I304–A324.

Belongs to the complex I subunit 1 family. NDH-1 is composed of 13 different subunits. Subunits NuoA, H, J, K, L, M, N constitute the membrane sector of the complex.

The protein resides in the cell inner membrane. It catalyses the reaction a quinone + NADH + 5 H(+)(in) = a quinol + NAD(+) + 4 H(+)(out). Its function is as follows. NDH-1 shuttles electrons from NADH, via FMN and iron-sulfur (Fe-S) centers, to quinones in the respiratory chain. The immediate electron acceptor for the enzyme in this species is believed to be ubiquinone. Couples the redox reaction to proton translocation (for every two electrons transferred, four hydrogen ions are translocated across the cytoplasmic membrane), and thus conserves the redox energy in a proton gradient. This subunit may bind ubiquinone. In Escherichia coli O7:K1 (strain IAI39 / ExPEC), this protein is NADH-quinone oxidoreductase subunit H.